Consider the following 344-residue polypeptide: MRNVQDQPLVSPTEPMIDPFGRAVTYLRVSVTDRCDFRCTYCMAEHMTFLPKKDLLTLEELDRLCSVFIEKGVRKLRLTGGEPLVRKNIMHLIGNLSRHLKSGALDELTLTTNGSQLARFAGELADCGVRRINVSLDTLNPEKFRTITRWGDLSRVLEGIDAAQKAAIHVKINAVALKDFNDAEIPELIRWAHGRGMDVTLIETMPMGEIEFDRTDQYLPLSQVRADLASQFTLADIPYRTGGPARYVTISETGGRLGFITPMTYNFCESCNRVRLTCTGMLYMCLGQNDDADLRKALRESESDEHLSQAIDEAISRKPKGHDFIIDREHNRPSVARHMSLTGG.

Residues 19–245 (PFGRAVTYLR…DIPYRTGGPA (227 aa)) enclose the Radical SAM core domain. Arg-28 contributes to the GTP binding site. Residues Cys-35 and Cys-39 each contribute to the [4Fe-4S] cluster site. Residue Tyr-41 participates in S-adenosyl-L-methionine binding. Cys-42 contacts [4Fe-4S] cluster. Arg-77 contributes to the GTP binding site. Gly-81 serves as a coordination point for S-adenosyl-L-methionine. Thr-111 lines the GTP pocket. Ser-135 is an S-adenosyl-L-methionine binding site. A GTP-binding site is contributed by Lys-171. Met-205 contributes to the S-adenosyl-L-methionine binding site. [4Fe-4S] cluster contacts are provided by Cys-268 and Cys-271. 273 to 275 (RVR) serves as a coordination point for GTP. A [4Fe-4S] cluster-binding site is contributed by Cys-285.

Belongs to the radical SAM superfamily. MoaA family. Monomer and homodimer. [4Fe-4S] cluster serves as cofactor.

The enzyme catalyses GTP + AH2 + S-adenosyl-L-methionine = (8S)-3',8-cyclo-7,8-dihydroguanosine 5'-triphosphate + 5'-deoxyadenosine + L-methionine + A + H(+). It functions in the pathway cofactor biosynthesis; molybdopterin biosynthesis. Its function is as follows. Catalyzes the cyclization of GTP to (8S)-3',8-cyclo-7,8-dihydroguanosine 5'-triphosphate. This Brucella abortus (strain S19) protein is GTP 3',8-cyclase.